A 259-amino-acid chain; its full sequence is Small ribosomal subunit protein uS2 (259 aa).

The tract at residues 224–259 is disordered; sequence GKQGEDDQQVAPAEDVAEEVSDESLQDLKNSVEGND. Residues 238–248 are compositionally biased toward acidic residues; that stretch reads DVAEEVSDESL. Residues 250-259 show a composition bias toward polar residues; that stretch reads DLKNSVEGND.

Belongs to the universal ribosomal protein uS2 family.

The polypeptide is Small ribosomal subunit protein uS2 (Limosilactobacillus fermentum (strain NBRC 3956 / LMG 18251) (Lactobacillus fermentum)).